The following is a 205-amino-acid chain: Large ribosomal subunit protein bL25 (205 aa).

The interval 185-205 (PAGAVSEAAEGGEAAGETPAA) is disordered. Low complexity predominate over residues 186–205 (AGAVSEAAEGGEAAGETPAA).

Belongs to the bacterial ribosomal protein bL25 family. CTC subfamily. In terms of assembly, part of the 50S ribosomal subunit; part of the 5S rRNA/L5/L18/L25 subcomplex. Contacts the 5S rRNA. Binds to the 5S rRNA independently of L5 and L18.

Its function is as follows. This is one of the proteins that binds to the 5S RNA in the ribosome where it forms part of the central protuberance. The protein is Large ribosomal subunit protein bL25 of Cupriavidus taiwanensis (strain DSM 17343 / BCRC 17206 / CCUG 44338 / CIP 107171 / LMG 19424 / R1) (Ralstonia taiwanensis (strain LMG 19424)).